The chain runs to 240 residues: Large ribosomal subunit protein bL25 (240 aa).

Disordered regions lie at residues 1–20 (MAEN…GPAR) and 204–240 (GAAP…KAKK). The segment covering 204 to 229 (GAAPAAGAAAPAGGAAPAAGAAPAKG) has biased composition (low complexity). Over residues 230 to 240 (GEAKGGDKAKK) the composition is skewed to basic and acidic residues.

The protein belongs to the bacterial ribosomal protein bL25 family. CTC subfamily. Part of the 50S ribosomal subunit; part of the 5S rRNA/L5/L18/L25 subcomplex. Contacts the 5S rRNA. Binds to the 5S rRNA independently of L5 and L18.

In terms of biological role, this is one of the proteins that binds to the 5S RNA in the ribosome where it forms part of the central protuberance. The sequence is that of Large ribosomal subunit protein bL25 from Anaeromyxobacter sp. (strain K).